A 287-amino-acid polypeptide reads, in one-letter code: Large ribosomal subunit protein uL2 (287 aa).

The disordered stretch occupies residues 221–287 (RGSVMNPCDH…SKRSRGGRDS (67 aa)). The segment covering 258-287 (KTRKKNKPSNKLVVRRRRRISKRSRGGRDS) has biased composition (basic residues).

It belongs to the universal ribosomal protein uL2 family. In terms of assembly, part of the 50S ribosomal subunit. Forms a bridge to the 30S subunit in the 70S ribosome.

Functionally, one of the primary rRNA binding proteins. Required for association of the 30S and 50S subunits to form the 70S ribosome, for tRNA binding and peptide bond formation. It has been suggested to have peptidyltransferase activity; this is somewhat controversial. Makes several contacts with the 16S rRNA in the 70S ribosome. This is Large ribosomal subunit protein uL2 from Prochlorococcus marinus (strain MIT 9312).